A 1212-amino-acid chain; its full sequence is Periplasmic/secreted acid trehalase ATH1 (1212 aa).

The Cytoplasmic portion of the chain corresponds to 1–82 (MGFKDKILFW…STRVKIRRQN (82 aa)). Residues 83–103 (ILNTTLILGMLIALVIWTAIL) traverse the membrane as a helical segment. Residues 104–1212 (STNSYFSSSL…ATIREIVLQE (1109 aa)) are Periplasmic-facing. N-linked (GlcNAc...) asparagine glycosylation is found at N243, N275, N296, N362, N414, N428, and N521. 546–547 (WD) serves as a coordination point for substrate. N572, N601, N661, and N671 each carry an N-linked (GlcNAc...) asparagine glycan. E677 functions as the Proton donor in the catalytic mechanism. N-linked (GlcNAc...) asparagine glycans are attached at residues N729 and N738. 744 to 745 (KQ) provides a ligand contact to substrate. N-linked (GlcNAc...) asparagine glycans are attached at residues N912, N938, N993, N1011, N1033, N1052, N1070, N1097, and N1165.

The protein belongs to the glycosyl hydrolase 65 family. In terms of assembly, homodimer.

It is found in the secreted. Its subcellular location is the periplasm. The protein localises to the membrane. The catalysed reaction is alpha,alpha-trehalose + H2O = alpha-D-glucose + beta-D-glucose. Periplasmic/secreted acid trehalase that catalyzes hydrolysis of the disaccharide trehalose and required for growth on trehalose as carbon source. Growth on trehalose is not restricted to respiration. This Candida glabrata (Yeast) protein is Periplasmic/secreted acid trehalase ATH1.